The primary structure comprises 329 residues: Serine dehydratase-like (329 aa).

The residue at position 1 (Met1) is an N-acetylmethionine. Lys48 is subject to N6-(pyridoxal phosphate)lysine.

It belongs to the serine/threonine dehydratase family. As to quaternary structure, monomer. Homodimer. It depends on pyridoxal 5'-phosphate as a cofactor. As to expression, abundantly expressed in liver.

It catalyses the reaction L-serine = pyruvate + NH4(+). The catalysed reaction is L-threonine = 2-oxobutanoate + NH4(+). It carries out the reaction L-glutamate = D-glutamate. Catalyzes the pyridoxal-phosphate-dependent dehydrative deamination of L-threonine and L-serine to ammonia and alpha-ketobutyrate and pyruvate, respectively. Also exhibits racemase activity towards L-glutamate and D-glutamate. In Mus musculus (Mouse), this protein is Serine dehydratase-like (Sdsl).